The primary structure comprises 504 residues: Pup--protein ligase (504 aa).

E30 contacts Mg(2+). An ATP-binding site is contributed by R74. A Mg(2+)-binding site is contributed by Y76. The active-site Proton acceptor is D78. Residue E84 participates in Mg(2+) binding. Positions 87 and 459 each coordinate ATP.

Belongs to the Pup ligase/Pup deamidase family. Pup-conjugating enzyme subfamily.

The catalysed reaction is ATP + [prokaryotic ubiquitin-like protein]-L-glutamate + [protein]-L-lysine = ADP + phosphate + N(6)-([prokaryotic ubiquitin-like protein]-gamma-L-glutamyl)-[protein]-L-lysine.. The protein operates within protein degradation; proteasomal Pup-dependent pathway. It functions in the pathway protein modification; protein pupylation. Its function is as follows. Catalyzes the covalent attachment of the prokaryotic ubiquitin-like protein modifier Pup to the proteasomal substrate proteins, thereby targeting them for proteasomal degradation. This tagging system is termed pupylation. The ligation reaction involves the side-chain carboxylate of the C-terminal glutamate of Pup and the side-chain amino group of a substrate lysine. In Corynebacterium urealyticum (strain ATCC 43042 / DSM 7109), this protein is Pup--protein ligase.